A 151-amino-acid polypeptide reads, in one-letter code: Globin CTT-IIIA (151 aa).

The region spanning 8–147 (SMTDAQVAAV…MFHVIFNALD (140 aa)) is the Globin domain. His98 serves as a coordination point for heme b.

The protein belongs to the globin family. Monomer.

This chain is Globin CTT-IIIA, found in Chironomus thummi thummi (Midge).